Here is a 181-residue protein sequence, read N- to C-terminus: GTP cyclohydrolase 1 2 (181 aa).

This sequence belongs to the GTP cyclohydrolase I family. In terms of assembly, homomer.

It carries out the reaction GTP + H2O = 7,8-dihydroneopterin 3'-triphosphate + formate + H(+). It participates in cofactor biosynthesis; 7,8-dihydroneopterin triphosphate biosynthesis; 7,8-dihydroneopterin triphosphate from GTP: step 1/1. This chain is GTP cyclohydrolase 1 2 (folE2), found in Pseudomonas aeruginosa (strain ATCC 15692 / DSM 22644 / CIP 104116 / JCM 14847 / LMG 12228 / 1C / PRS 101 / PAO1).